The following is a 148-amino-acid chain: MF7 protein (148 aa).

The chain is MF7 protein from Myxoma virus (strain Lausanne) (MYXV).